The following is a 362-amino-acid chain: Phosphoserine aminotransferase (362 aa).

Positions 9 and 42 each coordinate L-glutamate. Pyridoxal 5'-phosphate-binding positions include 76–77 (GR), W102, T153, D174, and Q197. An N6-(pyridoxal phosphate)lysine modification is found at K198. 239-240 (NT) contributes to the pyridoxal 5'-phosphate binding site.

This sequence belongs to the class-V pyridoxal-phosphate-dependent aminotransferase family. SerC subfamily. In terms of assembly, homodimer. Pyridoxal 5'-phosphate is required as a cofactor.

It localises to the cytoplasm. It catalyses the reaction O-phospho-L-serine + 2-oxoglutarate = 3-phosphooxypyruvate + L-glutamate. The enzyme catalyses 4-(phosphooxy)-L-threonine + 2-oxoglutarate = (R)-3-hydroxy-2-oxo-4-phosphooxybutanoate + L-glutamate. The protein operates within amino-acid biosynthesis; L-serine biosynthesis; L-serine from 3-phospho-D-glycerate: step 2/3. It functions in the pathway cofactor biosynthesis; pyridoxine 5'-phosphate biosynthesis; pyridoxine 5'-phosphate from D-erythrose 4-phosphate: step 3/5. Functionally, catalyzes the reversible conversion of 3-phosphohydroxypyruvate to phosphoserine and of 3-hydroxy-2-oxo-4-phosphonooxybutanoate to phosphohydroxythreonine. The sequence is that of Phosphoserine aminotransferase from Escherichia coli O127:H6 (strain E2348/69 / EPEC).